The following is a 235-amino-acid chain: Maximins-S type A (235 aa).

Residues 1-18 (MNFNYFILVLFFITSGHA) form the signal peptide. Propeptides lie at residues 19 to 35 (KSETRDVHQEAENHIKR) and 52 to 65 (SAEEQNLAEDLVKR). Asparagine amide is present on N83. A propeptide spanning residues 87–100 (SAEEQDLAEDLVTR) is cleaved from the precursor. An Asparagine amide modification is found at N118. Residues 122–135 (SAEEQDLAEDLVKR) constitute a propeptide that is removed on maturation. The residue at position 153 (N153) is an Asparagine amide. A propeptide spanning residues 157–170 (SAEEQDLAEDLVTR) is cleaved from the precursor. K188 bears the Lysine amide mark. A propeptide spanning residues 192-205 (SAEDQDLAEDLVTR) is cleaved from the precursor. K223 carries the lysine amide modification. A propeptide spanning residues 227 to 235 (SAEQEKDMK) is cleaved from the precursor.

The protein belongs to the maximin-S family. In terms of tissue distribution, expressed by the skin dorsal glands.

The protein localises to the secreted. Functionally, maximin-S1 has no antimicrobial activity. Has no hemolytic activity. Its function is as follows. Maximin-S2 has an activity against mycoplasma but has no activity against common Gram-positive and Gram-negative bacteria nor fungi. Has no hemolytic activity. In terms of biological role, maximin-S3 has an activity against mycoplasma but has no activity against common Gram-positive and Gram-negative bacteria nor fungi. Has no hemolytic activity. Maximin-S4 has an activity against mycoplasma but has no activity against common Gram-positive and Gram-negative bacteria nor fungi. Has no hemolytic activity. Functionally, maximin-S5 has an activity against mycoplasma but has no activity against common Gram-positive and Gram-negative bacteria nor fungi. Has no hemolytic activity. This chain is Maximins-S type A, found in Bombina maxima (Giant fire-bellied toad).